Here is a 406-residue protein sequence, read N- to C-terminus: Phosphopentomutase (406 aa).

Mn(2+) contacts are provided by aspartate 10, aspartate 305, histidine 310, aspartate 346, histidine 347, and histidine 358.

Belongs to the phosphopentomutase family. Mn(2+) serves as cofactor.

The protein resides in the cytoplasm. The enzyme catalyses 2-deoxy-alpha-D-ribose 1-phosphate = 2-deoxy-D-ribose 5-phosphate. It catalyses the reaction alpha-D-ribose 1-phosphate = D-ribose 5-phosphate. Its pathway is carbohydrate degradation; 2-deoxy-D-ribose 1-phosphate degradation; D-glyceraldehyde 3-phosphate and acetaldehyde from 2-deoxy-alpha-D-ribose 1-phosphate: step 1/2. Functionally, isomerase that catalyzes the conversion of deoxy-ribose 1-phosphate (dRib-1-P) and ribose 1-phosphate (Rib-1-P) to deoxy-ribose 5-phosphate (dRib-5-P) and ribose 5-phosphate (Rib-5-P), respectively. The protein is Phosphopentomutase of Rhizobium meliloti (strain 1021) (Ensifer meliloti).